Reading from the N-terminus, the 27-residue chain is MVGRYRFEFILIILILCALITARFYLS.

This is an uncharacterized protein from Escherichia coli (strain K12).